We begin with the raw amino-acid sequence, 174 residues long: FAD synthase (174 aa).

ATP-binding positions include 34 to 35, 39 to 42, Asp-119, and Tyr-147; these read TF and HPGH.

Belongs to the archaeal FAD synthase family. As to quaternary structure, homodimer. A divalent metal cation is required as a cofactor.

The enzyme catalyses FMN + ATP + H(+) = FAD + diphosphate. It functions in the pathway cofactor biosynthesis; FAD biosynthesis; FAD from FMN: step 1/1. In terms of biological role, catalyzes the transfer of the AMP portion of ATP to flavin mononucleotide (FMN) to produce flavin adenine dinucleotide (FAD) coenzyme. This is FAD synthase from Methanococcus voltae (strain ATCC BAA-1334 / A3).